We begin with the raw amino-acid sequence, 184 residues long: Probable RNA 2'-phosphotransferase (184 aa).

Belongs to the KptA/TPT1 family.

Functionally, removes the 2'-phosphate from RNA via an intermediate in which the phosphate is ADP-ribosylated by NAD followed by a presumed transesterification to release the RNA and generate ADP-ribose 1''-2''-cyclic phosphate (APPR&gt;P). May function as an ADP-ribosylase. This chain is Probable RNA 2'-phosphotransferase, found in Rhodopirellula baltica (strain DSM 10527 / NCIMB 13988 / SH1).